Here is a 188-residue protein sequence, read N- to C-terminus: MALKIAQELRAGNVFMIGNDPMVVLKTEYSRSGRNAAVVKMKYKNLLTGAPSESVFKADDKMDQIILDKKECTYSYFADPMYVFMDTDYNQYEVEADSMGDAIHYLEDGMAAEVTFYNEKAISVELPTTLVREIEYTEPAVKGDTSSGKVLKMAKIKGGFEIQVPLFCSTGDKIEIDTRTHEYRSRAN.

Belongs to the elongation factor P family.

It localises to the cytoplasm. The protein operates within protein biosynthesis; polypeptide chain elongation. In terms of biological role, involved in peptide bond synthesis. Stimulates efficient translation and peptide-bond synthesis on native or reconstituted 70S ribosomes in vitro. Probably functions indirectly by altering the affinity of the ribosome for aminoacyl-tRNA, thus increasing their reactivity as acceptors for peptidyl transferase. The sequence is that of Elongation factor P from Ralstonia nicotianae (strain ATCC BAA-1114 / GMI1000) (Ralstonia solanacearum).